The primary structure comprises 57 residues: Orphan toxin OrtT (57 aa).

2 helical membrane passes run 6 to 26 (HMLV…WFLS) and 34 to 54 (FLSA…ALLF).

It belongs to the GhoT/OrtT toxin family.

It localises to the cell inner membrane. Its function is as follows. Acts as an orphan toxin which is important for maintaining cell fitness during stress related to the stringent response. Increases the formation of persister cells. Has no known antitoxin. The chain is Orphan toxin OrtT from Escherichia coli O6:H1 (strain CFT073 / ATCC 700928 / UPEC).